The primary structure comprises 199 residues: Probable V-type proton ATPase 20 kDa proteolipid subunit (199 aa).

The Vacuolar portion of the chain corresponds to 1 to 3 (MSL). Residues 4 to 24 (FSTSLWTTTVMSIIVGLYMLF) form a helical membrane-spanning segment. Over 25–46 (HNSGESFDFGSFLLDTSPYTWG) the chain is Cytoplasmic. A helical transmembrane segment spans residues 47-67 (LLGIASCVAFGIIGAAWGIFI). Over 68–86 (CGTSILGGAVKAPRIKTKN) the chain is Vacuolar. The chain crosses the membrane as a helical span at residues 87-107 (LISIIFCEVVAIYSLIIAIVF). The Cytoplasmic portion of the chain corresponds to 108–130 (SAKINDINPAGFYTKSHYYTGFA). A helical membrane pass occupies residues 131-151 (LFWGGITVGLCNLICGVCVGI). Over 152–170 (TGSSAALADAQDASLFVKV) the chain is Vacuolar. The helical transmembrane segment at 171 to 191 (LVVEIFGSVLGLFGLIVGLLI) threads the bilayer. Residues 192–199 (GGKASDFS) lie on the Cytoplasmic side of the membrane.

Belongs to the V-ATPase proteolipid subunit family. In terms of assembly, V-ATPase is a heteromultimeric enzyme composed of a peripheral catalytic V1 complex (components A to H) attached to an integral membrane V0 proton pore complex (components: a, c, c', c'', d, e, f and VOA1). The decameric c-ring forms the proton-conducting pore, and is composed of eight proteolipid subunits c, one subunit c' and one subunit c''.

It is found in the vacuole membrane. Functionally, proton-conducting pore forming subunit of the V0 complex of vacuolar(H+)-ATPase (V-ATPase), a multisubunit enzyme composed of a peripheral complex (V1) that hydrolyzes ATP and a membrane integral complex (V0) that translocates protons. V-ATPase is responsible for acidifying and maintaining the pH of intracellular compartments. The protein is Probable V-type proton ATPase 20 kDa proteolipid subunit (vma16) of Schizosaccharomyces pombe (strain 972 / ATCC 24843) (Fission yeast).